A 447-amino-acid polypeptide reads, in one-letter code: Argininosuccinate synthase (447 aa).

ATP contacts are provided by residues 17–25 and Ala43; that span reads AFSGGLDTS. Residue Tyr99 participates in L-citrulline binding. ATP is bound by residues Gly129 and Thr131. Positions 131, 135, and 136 each coordinate L-aspartate. Asn135 serves as a coordination point for L-citrulline. Asp136 is an ATP binding site. The L-citrulline site is built by Arg139 and Ser192. An ATP-binding site is contributed by Asp194. 3 residues coordinate L-citrulline: Thr201, Glu203, and Glu280.

Belongs to the argininosuccinate synthase family. Type 2 subfamily. As to quaternary structure, homotetramer.

The protein localises to the cytoplasm. It carries out the reaction L-citrulline + L-aspartate + ATP = 2-(N(omega)-L-arginino)succinate + AMP + diphosphate + H(+). It functions in the pathway amino-acid biosynthesis; L-arginine biosynthesis; L-arginine from L-ornithine and carbamoyl phosphate: step 2/3. The protein is Argininosuccinate synthase of Paracidovorax citrulli (strain AAC00-1) (Acidovorax citrulli).